Here is a 444-residue protein sequence, read N- to C-terminus: Tubulin beta-9 chain (444 aa).

GTP-binding residues include glutamine 11, glutamate 69, serine 138, glycine 142, threonine 143, glycine 144, asparagine 204, and asparagine 226. Glutamate 69 provides a ligand contact to Mg(2+).

It belongs to the tubulin family. As to quaternary structure, dimer of alpha and beta chains. A typical microtubule is a hollow water-filled tube with an outer diameter of 25 nm and an inner diameter of 15 nM. Alpha-beta heterodimers associate head-to-tail to form protofilaments running lengthwise along the microtubule wall with the beta-tubulin subunit facing the microtubule plus end conferring a structural polarity. Microtubules usually have 13 protofilaments but different protofilament numbers can be found in some organisms and specialized cells. Interacts with TFCA. It depends on Mg(2+) as a cofactor.

The protein localises to the cytoplasm. Its subcellular location is the cytoskeleton. Tubulin is the major constituent of microtubules, a cylinder consisting of laterally associated linear protofilaments composed of alpha- and beta-tubulin heterodimers. Microtubules grow by the addition of GTP-tubulin dimers to the microtubule end, where a stabilizing cap forms. Below the cap, tubulin dimers are in GDP-bound state, owing to GTPase activity of alpha-tubulin. This chain is Tubulin beta-9 chain (TUBB9), found in Arabidopsis thaliana (Mouse-ear cress).